The primary structure comprises 518 residues: Xaa-Pro aminopeptidase 3 (518 aa).

The N-terminal 48 residues, 1-48 (MNNICKLNKFIISKSSSSLSSTSSKIKTNCLIKNAKMFSSSLNLNRFY), are a transit peptide targeting the mitochondrion. Y314, D345, D356, H434, H441, E461, and E485 together coordinate substrate. Residues D345, D356, and H434 each contribute to the Mn(2+) site. The Mn(2+) site is built by E461 and E485.

The protein belongs to the peptidase M24B family. Homodimer. Requires Mn(2+) as cofactor.

It is found in the mitochondrion. Its subcellular location is the cytoplasm. The catalysed reaction is Release of any N-terminal amino acid, including proline, that is linked to proline, even from a dipeptide or tripeptide.. Its function is as follows. Catalyzes the removal of a penultimate prolyl residue from the N-termini of peptides, such as Leu-Pro-Ala. Also shows low activity towards peptides with Ala or Ser at the P1 position. The chain is Xaa-Pro aminopeptidase 3 (xpnpep3) from Dictyostelium discoideum (Social amoeba).